We begin with the raw amino-acid sequence, 79 residues long: D-alanyl carrier protein (79 aa).

The 77-residue stretch at 1 to 77 folds into the Carrier domain; sequence MDIKSEVLKI…KIIEGITELR (77 aa). Residue Ser-35 is modified to O-(pantetheine 4'-phosphoryl)serine.

This sequence belongs to the DltC family. 4'-phosphopantetheine is transferred from CoA to a specific serine of apo-DCP.

It localises to the cytoplasm. Its pathway is cell wall biogenesis; lipoteichoic acid biosynthesis. Its function is as follows. Carrier protein involved in the D-alanylation of lipoteichoic acid (LTA). The loading of thioester-linked D-alanine onto DltC is catalyzed by D-alanine--D-alanyl carrier protein ligase DltA. The DltC-carried D-alanyl group is further transferred to cell membrane phosphatidylglycerol (PG) by forming an ester bond, probably catalyzed by DltD. D-alanylation of LTA plays an important role in modulating the properties of the cell wall in Gram-positive bacteria, influencing the net charge of the cell wall. The protein is D-alanyl carrier protein of Streptococcus mutans serotype c (strain ATCC 700610 / UA159).